Consider the following 81-residue polypeptide: Antitoxin VapB20 (81 aa).

Functionally, antitoxin component of a type II toxin-antitoxin (TA) system. Neutralizes the toxic effect of cognate toxin VapC20. This is Antitoxin VapB20 (vapB20) from Mycobacterium tuberculosis (strain CDC 1551 / Oshkosh).